The primary structure comprises 140 residues: Short-chain diamines transporter (140 aa).

A run of 4 helical transmembrane segments spans residues Ile7 to Leu27, Leu36 to Leu56, Val79 to Ile99, and Leu105 to Leu125.

It belongs to the proteobacterial antimicrobial compound efflux (PACE) (TC 2.A.117) family.

It localises to the cell inner membrane. Mediates the efflux of short-chain diamines when energized by an electrochemical gradient. Confers resistance to chlorhexidine, benzalkonium, proflavine and acriflavine. Mediates efflux of both proflavine and acriflavine via an energy-dependent mechanism. This is Short-chain diamines transporter from Vibrio parahaemolyticus serotype O3:K6 (strain RIMD 2210633).